We begin with the raw amino-acid sequence, 138 residues long: Transcription antitermination protein NusB (138 aa).

The protein belongs to the NusB family.

Involved in transcription antitermination. Required for transcription of ribosomal RNA (rRNA) genes. Binds specifically to the boxA antiterminator sequence of the ribosomal RNA (rrn) operons. The polypeptide is Transcription antitermination protein NusB (Helicobacter pylori (strain Shi470)).